The sequence spans 216 residues: Small ribosomal subunit protein uS4 (216 aa).

Residues 111–175 (RRLQTQVLRL…SPLVSESHPE (65 aa)) enclose the S4 RNA-binding domain. The tract at residues 194–216 (VAEAKQAKEKPPERGGRKRRGRR) is disordered. A compositionally biased stretch (basic and acidic residues) spans 198–208 (KQAKEKPPERG).

The protein belongs to the universal ribosomal protein uS4 family. Part of the 30S ribosomal subunit. Contacts protein S5. The interaction surface between S4 and S5 is involved in control of translational fidelity.

In terms of biological role, one of the primary rRNA binding proteins, it binds directly to 16S rRNA where it nucleates assembly of the body of the 30S subunit. Functionally, with S5 and S12 plays an important role in translational accuracy. The protein is Small ribosomal subunit protein uS4 of Methanosarcina barkeri (strain Fusaro / DSM 804).